The primary structure comprises 376 residues: 3-dehydroquinate synthase (376 aa).

Residues 115 to 119 (GVIGD), 139 to 140 (TS), lysine 152, and lysine 161 each bind NAD(+). Residues glutamate 194, histidine 256, and histidine 275 each coordinate Zn(2+).

Belongs to the sugar phosphate cyclases superfamily. Dehydroquinate synthase family. Co(2+) serves as cofactor. It depends on Zn(2+) as a cofactor. The cofactor is NAD(+).

The protein resides in the cytoplasm. The enzyme catalyses 7-phospho-2-dehydro-3-deoxy-D-arabino-heptonate = 3-dehydroquinate + phosphate. It participates in metabolic intermediate biosynthesis; chorismate biosynthesis; chorismate from D-erythrose 4-phosphate and phosphoenolpyruvate: step 2/7. Functionally, catalyzes the conversion of 3-deoxy-D-arabino-heptulosonate 7-phosphate (DAHP) to dehydroquinate (DHQ). This is 3-dehydroquinate synthase from Rhizobium etli (strain CIAT 652).